We begin with the raw amino-acid sequence, 459 residues long: Hepatocyte nuclear factor 3-beta (459 aa).

The segment at 14 to 93 (DWSSYYAEPE…AGAMAGMSGS (80 aa)) is transactivation domain 1. Positions 106 to 113 (LSPSLSPL) match the Nuclear localization signal motif. The residue at position 156 (threonine 156) is a Phosphothreonine. The segment at residues 159-252 (KPPYSYISLI…FENGCYLRRQ (94 aa)) is a DNA-binding region (fork-head). A Phosphoserine modification is found at serine 212. A compositionally biased stretch (low complexity) spans 268-281 (GAASSGGKKTAPGS). The segment at 268–366 (GAASSGGKKT…PGLPPEAHLK (99 aa)) is disordered. Phosphoserine is present on serine 284. Residues 295-311 (ASETPAGTESPHSSASP) are compositionally biased toward polar residues. Threonine 302 is modified (phosphothreonine). Serine 304, serine 307, serine 308, and serine 310 each carry phosphoserine. The segment covering 340-353 (PGQQQQAAAHLLGP) has biased composition (low complexity). The transactivation domain 2 stretch occupies residues 362-459 (EAHLKPEHHY…VYSRPIMNSS (98 aa)). 2 positions are modified to phosphoserine: serine 438 and serine 459.

As to quaternary structure, binds DNA as a monomer. Binds TLE1. Interacts with FOXA1 and FOXA3. Interacts with PRKDC. Interacts with AKT1. Interacts with TET1; this interaction may recruit TET1 to specific genomic loci to mediate their demethylation. Post-translationally, phosphorylation on Thr-156 abolishes binding to target promoters and subsequent transcription activation upon insulin stimulation. Restricted mainly to endoderm-derived tissues (lung, liver, stomach, and small intestine). Expressed in epididymis with region-specific expression pattern: no expression is observed in initial segment, low expression in proximal caput, gradiently higher levels of expression in middle and distal caput and highest level in corpus and cauda (at protein level).

The protein localises to the nucleus. It is found in the cytoplasm. In terms of biological role, transcription factor that is involved in embryonic development, establishment of tissue-specific gene expression and regulation of gene expression in differentiated tissues. Is thought to act as a 'pioneer' factor opening the compacted chromatin for other proteins through interactions with nucleosomal core histones and thereby replacing linker histones at target enhancer and/or promoter sites. Binds DNA with the consensus sequence 5'-[AC]A[AT]T[AG]TT[GT][AG][CT]T[CT]-3'. In embryonic development is required for notochord formation. Involved in the development of multiple endoderm-derived organ systems such as the liver, pancreas and lungs; Foxa1 and Foxa2 seem to have at least in part redundant roles. FOXA1 and FOXA2 are essential for hepatic specification. FOXA1 and FOXA2 are required for morphogenesis and cell differentiation during formation of the lung. FOXA1 and FOXA2 are involved in bile duct formation; they positively regulate the binding glucocorticoid receptor/NR3C1 to the IL6 promoter. FOXA1 and FOXA2 regulate multiple phases of midbrain dopaminergic neuron development; they regulate expression of NEUROG2 at the beginning of mDA neurogenesis and of NR4A2 and EN1 in immature mDA neurons. Modulates the transcriptional activity of nuclear hormone receptors; inhibits AR-mediated transcription from the LCN5 promoter. Binds to fibrinogen beta promoter and is involved in IL6-induced fibrinogen beta transcriptional activation. Originally described as a transcription activator for a number of liver genes such as AFP, albumin, tyrosine aminotransferase, PEPCK, etc. Interacts with the cis-acting regulatory regions of these genes. Involved in glucose homeostasis; regulates the expression of genes important for glucose sensing in pancreatic beta-cells and glucose homeostasis. In pancreatic beta cells activates transcription of potassium channel subunits KCNJ11 and ABCC8. Involved in regulation of fat metabolism; activates transcriptional programs of lipid metabolism and ketogenesis at low insulin state. Involved in transcriptional regulation of MUC2 in the intestine. The polypeptide is Hepatocyte nuclear factor 3-beta (Foxa2) (Mus musculus (Mouse)).